A 293-amino-acid polypeptide reads, in one-letter code: Acetylglutamate kinase (293 aa).

Substrate contacts are provided by residues 60-61 (GG), R82, and N188.

The protein belongs to the acetylglutamate kinase family. ArgB subfamily.

It localises to the cytoplasm. It carries out the reaction N-acetyl-L-glutamate + ATP = N-acetyl-L-glutamyl 5-phosphate + ADP. The protein operates within amino-acid biosynthesis; L-arginine biosynthesis; N(2)-acetyl-L-ornithine from L-glutamate: step 2/4. Catalyzes the ATP-dependent phosphorylation of N-acetyl-L-glutamate. This is Acetylglutamate kinase from Methanothermobacter thermautotrophicus (strain ATCC 29096 / DSM 1053 / JCM 10044 / NBRC 100330 / Delta H) (Methanobacterium thermoautotrophicum).